The following is a 205-amino-acid chain: Non-specific lipid transfer protein GPI-anchored 13 (205 aa).

The first 24 residues, 1 to 24 (MESRKIKVMATAIALIMVAMVVDA), serve as a signal peptide directing secretion. 4 disulfides stabilise this stretch: Cys-36-Cys-77, Cys-46-Cys-61, Cys-62-Cys-104, and Cys-75-Cys-113. 3 N-linked (GlcNAc...) asparagine glycosylation sites follow: Asn-93, Asn-137, and Asn-165. Positions 141–176 (SASAPTGSASEPTSMSSTPGSSAGNNSGRTTSVPGT) are disordered. Asn-177 is lipidated: GPI-anchor amidated asparagine. Positions 178 to 205 (HAQSFSKQWLGLEVVAHFFVIFYIFILV) are cleaved as a propeptide — removed in mature form.

It belongs to the plant LTP family. As to expression, expressed preferentially in expanding leaves and sepals, restricted to the distal side. Expressed at low levels in roots and stems.

It localises to the cell membrane. Probable lipid transfer protein. The protein is Non-specific lipid transfer protein GPI-anchored 13 of Arabidopsis thaliana (Mouse-ear cress).